The chain runs to 312 residues: MSIEHTSHDPSKPDPAKARTLAAALPWLKRYHGKIVVVKYGGNAMTDETLKRAFAEDIAFLRFAGFKPVVVHGGGPQISTMLDRLGIRSEFRGGLRVTTPEAMDVVRMVLVGQVQRELVGLINEHGPLAVGCSGEDAGLFTAEPANTVIDGEEVDLGLVGEVARVRPESVLDLIEAGRIPVVSSVAPDADGQVHNVNADSAAAALAVALGAEKLLVLTDVEGLYLDWPSSDDVIGEISPEALEEILPTLASGMVPKMGACLQAVRNGVPRATVVDGREPHAVLLELFTNEGVGTQVLPGVETKTRKARDTQS.

Residues 74 to 75 (GG), R96, and N195 each bind substrate.

It belongs to the acetylglutamate kinase family. ArgB subfamily.

It is found in the cytoplasm. It carries out the reaction N-acetyl-L-glutamate + ATP = N-acetyl-L-glutamyl 5-phosphate + ADP. It functions in the pathway amino-acid biosynthesis; L-arginine biosynthesis; N(2)-acetyl-L-ornithine from L-glutamate: step 2/4. Its function is as follows. Catalyzes the ATP-dependent phosphorylation of N-acetyl-L-glutamate. In Nocardioides sp. (strain ATCC BAA-499 / JS614), this protein is Acetylglutamate kinase.